The primary structure comprises 285 residues: MTSIHEDTHIGYAKLTIRSLERSLQFYCNVIGFQVLKKTDRQAELTADGKRVLLILEENPSAVVLPERSVTGLYHFAILLPDRKELGIALARLIEHGIAIGHGDHAVSEALYLSDPDGNGIEMYADRPRSTWQRDREGNYVMTTTAVDIEGLLEEAGDERKTSLPNDTIIGHIHLHVSDLKEAKAFYTDVLGFDIVGNYAGMSALFVSAGGYHHHIGLNIWAGRNAPPKPTNASGLDYYTVVLPHQEELDLVANRVKHAGYSIEETENSFRVKDPVSGAYITFVI.

VOC domains follow at residues His-9–Asp-126 and Ile-169–Ile-285. 2 residues coordinate Fe cation: His-213 and Glu-264.

The protein belongs to the extradiol ring-cleavage dioxygenase family. The cofactor is Fe(2+).

The enzyme catalyses catechol + O2 = (2Z,4E)-2-hydroxy-6-oxohexa-2,4-dienoate + H(+). Involved in the meta cleavage of catechol to 2-hydroxymuconic semialdehyde. Essential for growth and viability in the presence of catechol and probably involved in the detoxification of catechol. This chain is Catechol-2,3-dioxygenase (catE), found in Bacillus subtilis (strain 168).